Here is a 78-residue protein sequence, read N- to C-terminus: Defensin-like protein 141 (78 aa).

The N-terminal stretch at 1 to 24 (MTKSIISAFFIILILGMMVNEIEG) is a signal peptide. 4 disulfide bridges follow: cysteine 31–cysteine 76, cysteine 40–cysteine 59, cysteine 45–cysteine 70, and cysteine 49–cysteine 72.

Belongs to the DEFL family.

It is found in the secreted. The protein is Defensin-like protein 141 (LCR3) of Arabidopsis thaliana (Mouse-ear cress).